Here is a 287-residue protein sequence, read N- to C-terminus: Very long chain fatty acid elongase 4 (287 aa).

Transmembrane regions (helical) follow at residues Ile-33–Met-53, Pro-64–Val-84, and Phe-115–Val-135. A HxxHH motif motif is present at residues His-145 to His-149. His-148 (nucleophile) is an active-site residue. The next 4 helical transmembrane spans lie at Leu-150–Phe-170, Thr-172–Met-192, Ile-199–Leu-219, and Leu-241–Tyr-261.

This sequence belongs to the ELO family.

The protein localises to the membrane. It catalyses the reaction a very-long-chain acyl-CoA + malonyl-CoA + H(+) = a very-long-chain 3-oxoacyl-CoA + CO2 + CoA. Functionally, involved in the synthesis of fatty acids. Elongates C16:0 and C18:0 fatty acids to C26:0, with C24:0 being the main product. This is Very long chain fatty acid elongase 4 from Trypanosoma cruzi (strain CL Brener).